We begin with the raw amino-acid sequence, 250 residues long: 2,3-bisphosphoglycerate-dependent phosphoglycerate mutase (250 aa).

Substrate is bound by residues 10–17 (RHGESQWN), 23–24 (TG), arginine 62, 89–92 (ERHY), lysine 100, 116–117 (RR), and 185–186 (GN). Histidine 11 acts as the Tele-phosphohistidine intermediate in catalysis. Glutamate 89 (proton donor/acceptor) is an active-site residue.

This sequence belongs to the phosphoglycerate mutase family. BPG-dependent PGAM subfamily. In terms of assembly, homodimer.

The enzyme catalyses (2R)-2-phosphoglycerate = (2R)-3-phosphoglycerate. It participates in carbohydrate degradation; glycolysis; pyruvate from D-glyceraldehyde 3-phosphate: step 3/5. Its function is as follows. Catalyzes the interconversion of 2-phosphoglycerate and 3-phosphoglycerate. This is 2,3-bisphosphoglycerate-dependent phosphoglycerate mutase from Salmonella paratyphi A (strain ATCC 9150 / SARB42).